Here is a 20-residue protein sequence, read N- to C-terminus: Equinatoxin-3 (20 aa).

The segment at 3–12 is plays an important role in the hemolytic activity; it reads AVAGAIIKGA. An N-terminal region region spans residues 11 to 20; sequence GAALTFNVLQ.

Belongs to the actinoporin family. Sea anemone subfamily. Octamer or nonamer in membranes. Monomer in the soluble state.

The protein localises to the secreted. It is found in the nematocyst. Its subcellular location is the target cell membrane. Pore-forming protein that forms cations-selective hydrophilic pores of around 1 nm and causes cardiac stimulation and cytolysis. Pore formation is a multi-step process that involves specific recognition of membrane sphingomyelin (but neither cholesterol nor phosphatidylcholine) using aromatic rich region and adjacent phosphocholine (POC) binding site, firm binding to the membrane (mainly driven by hydrophobic interactions) accompanied by the transfer of the N-terminal region to the lipid-water interface and finally pore formation after oligomerization of monomers. Cytolytic effects include red blood cells hemolysis, platelet aggregation and lysis, cytotoxic and cytostatic effects on fibroblasts. Lethality in mammals has been ascribed to severe vasospasm of coronary vessels, cardiac arrhythmia, and inotropic effects. The chain is Equinatoxin-3 from Actinia equina (Beadlet anemone).